The chain runs to 294 residues: ATP synthase gamma chain (294 aa).

The protein belongs to the ATPase gamma chain family. As to quaternary structure, F-type ATPases have 2 components, CF(1) - the catalytic core - and CF(0) - the membrane proton channel. CF(1) has five subunits: alpha(3), beta(3), gamma(1), delta(1), epsilon(1). CF(0) has three main subunits: a, b and c.

The protein resides in the cell inner membrane. Functionally, produces ATP from ADP in the presence of a proton gradient across the membrane. The gamma chain is believed to be important in regulating ATPase activity and the flow of protons through the CF(0) complex. The polypeptide is ATP synthase gamma chain (Campylobacter jejuni subsp. jejuni serotype O:23/36 (strain 81-176)).